Reading from the N-terminus, the 226-residue chain is Fibronectin type III domain-containing protein 10 (226 aa).

The first 20 residues, 1 to 20 (MRAPPLLLLLAACAPPPCAA), serve as a signal peptide directing secretion. The Extracellular segment spans residues 21-182 (AAPTPPGWEP…FTAEPAGMQD (162 aa)). A Fibronectin type-III domain is found at 74–166 (PAGRSLRASV…PAAAAPETPE (93 aa)). N-linked (GlcNAc...) asparagine glycans are attached at residues asparagine 86 and asparagine 109. The chain crosses the membrane as a helical span at residues 183-203 (IVVAMTAVGGSICVMLVVICL). The Cytoplasmic segment spans residues 204–226 (LVAYITENLMRPALARPGLRRHP).

It is found in the membrane. The sequence is that of Fibronectin type III domain-containing protein 10 (FNDC10) from Homo sapiens (Human).